The chain runs to 981 residues: MDDQKGPLPPYTPTATAPPPASMRQRRPPGRRRALRRSRTVRVLALACLAFVVLAQWKQLWRGERKAPPYLSVDKLNDNLETCRKLRVRPQDPAGPGRSKNDRYLDGGGKPTLIRNALIWTGEPVPGTSDEDARAGVGWAWWLGDVLVERGLITKVDNKMPASEVPEDAIIYDAEGRRLTSGIVDMHSHAGVSPLPGLNGNDDTNEASDNITPWARSIDGLFPLDPQIQVIKSGGVTSSLILPGSANNIGGEAFLIKHAVGRHDGRPELSAASMLADPDRTWRYMKMACGENAKRVHGSRTTRPVTRMGESYDFRRAFERASQLVRRQDDWCDRAGEVGVGSMDEYLPEDLEWEALGAALRGQVHVNAHCYTVNDLEAMVDHSNEFEFPIRAFHHAHQAHLVPEILNRTWGGRPPALAIFADNMYYKAEAYIGTPSAGKMLYDQGLTPIYVSDNPVLNAQHVVLEAAKGFHYGLPYHAALASVTTAPADTLGMGQRLGKIKAGFDADIVVWDSDPLGVGAAPVQVWIDGTAQFDDPVVLSKPHARAEKDTVVVPDAPPPVVVEEPVEVADVLFRGVTRVLLDEHDVSAEDGASLNVAIRGGRISCIGECADEFRVAIDAGVGVVTLGNGHLHKTFVGVGGTLGLNEIDGESKTGNGKNPKTFTRAVDGLLLGGKKLRAAHHAGVTRAISAPRFKGGGNTHHGTSVGIVTSARTSLDAGAIFGNGDVAVHYTLDLSVRGGDDESYSAAFGSLREKLIRAGVHGGKEKEVGAEEVGAEEEEEEEEKAFLRRVLASEMVLALTINSADGIATALRIKDEVDKKQQKQQQQQQQQQQQQHGTSSGIRMAIIGGAEAYLVAEHLAAANVGVILSPLQSYGETWDARRALPGAPLTNGTNIDRLLDAGVKVGIGLKEDWEVRDLALAAGTAYENGGGRLTGRQALDLVGRNVLEILGVEEEEETPGATMGESGHFVVLLIINMFCGL.

A disordered region spans residues 1–36 (MDDQKGPLPPYTPTATAPPPASMRQRRPPGRRRALR). The span at 7-21 (PLPPYTPTATAPPPA) shows a compositional bias: pro residues. Over residues 24–36 (RQRRPPGRRRALR) the composition is skewed to basic residues. Residues 40–57 (TVRVLALACLAFVVLAQW) traverse the membrane as a helical segment. The interval 86–107 (LRVRPQDPAGPGRSKNDRYLDG) is disordered. Residues His-187 and His-189 each coordinate Fe(2+). His-187 and His-189 together coordinate Zn(2+). N-linked (GlcNAc...) asparagine glycosylation occurs at Asn-407. The interval 819-838 (KKQQKQQQQQQQQQQQQHGT) is disordered. Low complexity predominate over residues 823–835 (KQQQQQQQQQQQQ). Asn-891 carries an N-linked (GlcNAc...) asparagine glycan.

The protein belongs to the metallo-dependent hydrolases superfamily. It depends on Fe(2+) as a cofactor. The cofactor is Mn(2+). Zn(2+) is required as a cofactor.

The protein resides in the membrane. Functionally, amidohydrolase; part of the gene cluster that mediates the biosynthesis of the tetramic acids Sch210971 and Sch210972, potential anti-HIV fungal natural product that contain a decalin core. The PKS module of tasS together with the enoylreductase tasC catalyze the formation of the polyketide unit which is then conjugated to 4-hydroxyl-4-methyl glutamate (HMG) by the condensation domain of the tasS NRPS module. One unique structural feature of Sch210971 and Sch210972 is the tetramic acid motif proposed to be derived from the non-proteinogenic amino acid HMG, by a Dieckmann-type condensation catalyzed by the reductase domain of tasS. The aldolase tasA catalyzes the aldol condensation of 2 molecules of pyruvic acid to yield the intermediate 4-hydroxyl-4-methyl-2-oxoglutarate (HMOG), which can then be stereoselectively transaminated, may be by tasG, to form HMG. The Diels-Alderase tas3 then uses the Dieckmann product of tasS as substrate and catalyzes the Diels-Alder cycloaddition to form the decalin ring of Sch210971 and Sch210972. This chain is Amidohydrolase tasK, found in Hapsidospora irregularis.